The sequence spans 579 residues: Cyclin-T1-5 (579 aa).

2 disordered regions span residues 1–27 and 271–419; these read MAGV…HEKQ and RVPA…GDAL. Residues 11–20 show a composition bias toward polar residues; the sequence is YSESGVSSHS. Low complexity predominate over residues 274–283; that stretch reads ASQGSEVESS. Residues 306 to 334 are compositionally biased toward polar residues; sequence SRQTSSVRSTHEQSNSDNHGGSSKGVLNQ. Composition is skewed to basic and acidic residues over residues 349–380 and 389–414; these read DNKE…EAPH and PGKD…RNVD. Residue Ser423 is modified to Phosphoserine. Composition is skewed to basic and acidic residues over residues 474-512, 538-556, and 563-579; these read DEKT…KNTE, KQSE…ESHK, and HHGD…NNHS. The tract at residues 474-579 is disordered; the sequence is DEKTKERKVQ…RRHSQENNHS (106 aa).

This sequence belongs to the cyclin family. Cyclin T subfamily.

The sequence is that of Cyclin-T1-5 (CYCT1-5) from Arabidopsis thaliana (Mouse-ear cress).